The chain runs to 349 residues: 5-deoxyribose 1-phosphate isomerase (349 aa).

Residues 49–51, Arg-92, and Gln-199 each bind substrate; that span reads RGA. Asp-240 serves as the catalytic Proton donor. Position 250-251 (250-251) interacts with substrate; sequence NK.

The protein belongs to the EIF-2B alpha/beta/delta subunits family. DrdI subfamily.

The enzyme catalyses 5-deoxy-alpha-D-ribose 1-phosphate = 5-deoxy-D-ribulose 1-phosphate. It participates in carbohydrate degradation. Catalyzes the isomerization of 5-deoxy-alpha-D-ribose 1-phosphate to 5-deoxy-D-ribulose 1-phosphate, as part of a 5-deoxyribose salvage pathway that recycles this toxic radical SAM enzyme by-product to mainstream metabolites. This chain is 5-deoxyribose 1-phosphate isomerase, found in Clostridium botulinum (strain Langeland / NCTC 10281 / Type F).